Reading from the N-terminus, the 165-residue chain is Putative 4-hydroxy-4-methyl-2-oxoglutarate aldolase (165 aa).

Substrate-binding positions include 80–83 (GGNL) and Arg-102. An a divalent metal cation-binding site is contributed by Asp-103.

The protein belongs to the class II aldolase/RraA-like family. In terms of assembly, homotrimer. It depends on a divalent metal cation as a cofactor.

It carries out the reaction 4-hydroxy-4-methyl-2-oxoglutarate = 2 pyruvate. The enzyme catalyses oxaloacetate + H(+) = pyruvate + CO2. Catalyzes the aldol cleavage of 4-hydroxy-4-methyl-2-oxoglutarate (HMG) into 2 molecules of pyruvate. Also contains a secondary oxaloacetate (OAA) decarboxylase activity due to the common pyruvate enolate transition state formed following C-C bond cleavage in the retro-aldol and decarboxylation reactions. This chain is Putative 4-hydroxy-4-methyl-2-oxoglutarate aldolase, found in Cupriavidus necator (strain ATCC 17699 / DSM 428 / KCTC 22496 / NCIMB 10442 / H16 / Stanier 337) (Ralstonia eutropha).